We begin with the raw amino-acid sequence, 288 residues long: Small ribosomal subunit protein uS9m (288 aa).

The disordered stretch occupies residues 269–288 (VERKKPGKKKARKMPTWVKR).

This sequence belongs to the universal ribosomal protein uS9 family.

Its subcellular location is the mitochondrion. In Candida glabrata (strain ATCC 2001 / BCRC 20586 / JCM 3761 / NBRC 0622 / NRRL Y-65 / CBS 138) (Yeast), this protein is Small ribosomal subunit protein uS9m (MRPS9).